The following is a 275-amino-acid chain: MLCAICNVSSGNCAEDCAYCTQSAHIKADIPKFKQKNLEQILNEAKIASKNYALGFCLVTSGLGLDDKKLEFICEAATMLRKETPNLMLIACNGSASYESLKELKKVGIFSYNHNLETSREFFPQICTTHSWDDRFNTNLNAKKAGLELCCGGIYGLGESQDDRLSFRASLKELNPFSSPINFFIPNPALKIKQPLLSTDEALEIIRDTAKTLPQCRIMVAGGREIVLGDRQYEILENGASAIVIGDYLTTSGEVASKDIEELRNRGFEFASQCH.

Residues 1–217 form the Radical SAM core domain; the sequence is MLCAICNVSS…DTAKTLPQCR (217 aa). Positions 13, 17, and 20 each coordinate [4Fe-4S] cluster. Cys57, Cys92, Cys150, and Arg217 together coordinate [2Fe-2S] cluster.

This sequence belongs to the radical SAM superfamily. Biotin synthase family. Homodimer. It depends on [4Fe-4S] cluster as a cofactor. [2Fe-2S] cluster serves as cofactor.

It carries out the reaction (4R,5S)-dethiobiotin + (sulfur carrier)-SH + 2 reduced [2Fe-2S]-[ferredoxin] + 2 S-adenosyl-L-methionine = (sulfur carrier)-H + biotin + 2 5'-deoxyadenosine + 2 L-methionine + 2 oxidized [2Fe-2S]-[ferredoxin]. It participates in cofactor biosynthesis; biotin biosynthesis; biotin from 7,8-diaminononanoate: step 2/2. In terms of biological role, catalyzes the conversion of dethiobiotin (DTB) to biotin by the insertion of a sulfur atom into dethiobiotin via a radical-based mechanism. This chain is Biotin synthase, found in Campylobacter fetus subsp. fetus (strain 82-40).